The sequence spans 483 residues: SWI/SNF-related matrix-associated actin-dependent regulator of chromatin subfamily D member 3 (483 aa).

At alanine 2 the chain carries N-acetylalanine. The segment at 27–102 is disordered; sequence RPGMPSGARM…ARSRSAKRRK (76 aa). The segment covering 78 to 88 has biased composition (low complexity); sequence QSQAQGQGQPV. Serine 178 carries the phosphoserine modification. One can recognise an SWIB/MDM2 domain in the interval 258–335; sequence YQPPQFKLDP…PQRLTALLLP (78 aa).

Belongs to the SMARCD family. Component of the multiprotein chromatin-remodeling complexes SWI/SNF: SWI/SNF-A (BAF), SWI/SNF-B (PBAF) and related complexes. The canonical complex contains a catalytic subunit (either SMARCA4/BRG1/BAF190A or SMARCA2/BRM/BAF190B) and at least SMARCE1, ACTL6A/BAF53, SMARCC1/BAF155, SMARCC2/BAF170, and SMARCB1/SNF5/BAF47. Other subunits specific to each of the complexes may also be present permitting several possible combinations developmentally and tissue specific. Component of the BAF complex, which includes at least actin (ACTB), ARID1A/BAF250A, ARID1B/BAF250B, SMARCA2/BRM, SMARCA4/BRG1/BAF190A, ACTL6A/BAF53, ACTL6B/BAF53B, SMARCE1/BAF57, SMARCC1/BAF155, SMARCC2/BAF170, SMARCB1/SNF5/INI1, and one or more SMARCD1/BAF60A, SMARCD2/BAF60B, or SMARCD3/BAF60C. In muscle cells, the BAF complex also contains DPF3. Component of neural progenitors-specific chromatin remodeling complex (npBAF complex) composed of at least, ARID1A/BAF250A or ARID1B/BAF250B, SMARCD1/BAF60A, SMARCD3/BAF60C, SMARCA2/BRM/BAF190B, SMARCA4/BRG1/BAF190A, SMARCB1/BAF47, SMARCC1/BAF155, SMARCE1/BAF57, SMARCC2/BAF170, PHF10/BAF45A, ACTL6A/BAF53A and actin. Component of neuron-specific chromatin remodeling complex (nBAF complex) composed of at least, ARID1A/BAF250A or ARID1B/BAF250B, SMARCD1/BAF60A, SMARCD3/BAF60C, SMARCA2/BRM/BAF190B, SMARCA4/BRG1/BAF190A, SMARCB1/BAF47, SMARCC1/BAF155, SMARCE1/BAF57, SMARCC2/BAF170, DPF1/BAF45B, DPF3/BAF45C, ACTL6B/BAF53B and actin. May be a component of the SWI/SNF-B (PBAF) chromatin remodeling complex, at least composed of SMARCA4/BRG1, SMARCB1/BAF47/SNF5, ACTL6A/BAF53A or ACTL6B/BAF53B, SMARCE1/BAF57, SMARCD1/BAF60A, SMARCD2/BAF60B, perhaps SMARCD3/BAF60C, SMARCC1/BAF155, SMARCC2/BAF170, PBRM1/BAF180, ARID2/BAF200 and actin. Component of SWI/SNF (GBAF) subcomplex, which includes at least BICRA or BICRAL (mutually exclusive), BRD9, SS18, SMARCA2/BRM, SMARCA4/BRG1/BAF190A, ACTL6A/BAF53, SMARCC1/BAF155, and SMARCD1/BAF60A. Interacts with SMARCA4/BRG1/BAF190A. The precise distribution of the related SMARCD1, SMARCD2 and SMARCD3 proteins among these and other SWI/SNF nucleosome-remodeling complexes is not fully known. May allow recruitment of SWI/SNF containing complexes specifically to promoters where these factors are located. Also interacts with several nuclear receptors including PPARG/NR1C3, RXRA/NR1F1, ESR1, NR5A1, NR5A2/LRH1 and other transcriptional activators including the HLH protein SREBF1/SREBP1 and the homeobox protein PBX1. Interacts with PRDM1/BLIMP1. As to expression, ubiquitously expressed.

Its subcellular location is the nucleus. Involved in transcriptional activation and repression of select genes by chromatin remodeling (alteration of DNA-nucleosome topology). Component of SWI/SNF chromatin remodeling complexes that carry out key enzymatic activities, changing chromatin structure by altering DNA-histone contacts within a nucleosome in an ATP-dependent manner. Stimulates nuclear receptor mediated transcription. Belongs to the neural progenitors-specific chromatin remodeling complex (npBAF complex) and the neuron-specific chromatin remodeling complex (nBAF complex). During neural development a switch from a stem/progenitor to a postmitotic chromatin remodeling mechanism occurs as neurons exit the cell cycle and become committed to their adult state. The transition from proliferating neural stem/progenitor cells to postmitotic neurons requires a switch in subunit composition of the npBAF and nBAF complexes. As neural progenitors exit mitosis and differentiate into neurons, npBAF complexes which contain ACTL6A/BAF53A and PHF10/BAF45A, are exchanged for homologous alternative ACTL6B/BAF53B and DPF1/BAF45B or DPF3/BAF45C subunits in neuron-specific complexes (nBAF). The npBAF complex is essential for the self-renewal/proliferative capacity of the multipotent neural stem cells. The nBAF complex along with CREST plays a role regulating the activity of genes essential for dendrite growth. In Mus musculus (Mouse), this protein is SWI/SNF-related matrix-associated actin-dependent regulator of chromatin subfamily D member 3 (Smarcd3).